The chain runs to 215 residues: Thiamine-phosphate synthase (215 aa).

Residues 37 to 41 and asparagine 69 contribute to the 4-amino-2-methyl-5-(diphosphooxymethyl)pyrimidine site; that span reads QLRIK. The Mg(2+) site is built by aspartate 70 and aspartate 89. 4-amino-2-methyl-5-(diphosphooxymethyl)pyrimidine is bound at residue serine 108. 134–136 is a 2-[(2R,5Z)-2-carboxy-4-methylthiazol-5(2H)-ylidene]ethyl phosphate binding site; sequence TQT. Lysine 137 contacts 4-amino-2-methyl-5-(diphosphooxymethyl)pyrimidine. 2-[(2R,5Z)-2-carboxy-4-methylthiazol-5(2H)-ylidene]ethyl phosphate-binding positions include glycine 166 and 186 to 187; that span reads VS.

The protein belongs to the thiamine-phosphate synthase family. Requires Mg(2+) as cofactor.

It carries out the reaction 2-[(2R,5Z)-2-carboxy-4-methylthiazol-5(2H)-ylidene]ethyl phosphate + 4-amino-2-methyl-5-(diphosphooxymethyl)pyrimidine + 2 H(+) = thiamine phosphate + CO2 + diphosphate. The catalysed reaction is 2-(2-carboxy-4-methylthiazol-5-yl)ethyl phosphate + 4-amino-2-methyl-5-(diphosphooxymethyl)pyrimidine + 2 H(+) = thiamine phosphate + CO2 + diphosphate. The enzyme catalyses 4-methyl-5-(2-phosphooxyethyl)-thiazole + 4-amino-2-methyl-5-(diphosphooxymethyl)pyrimidine + H(+) = thiamine phosphate + diphosphate. It participates in cofactor biosynthesis; thiamine diphosphate biosynthesis; thiamine phosphate from 4-amino-2-methyl-5-diphosphomethylpyrimidine and 4-methyl-5-(2-phosphoethyl)-thiazole: step 1/1. In terms of biological role, condenses 4-methyl-5-(beta-hydroxyethyl)thiazole monophosphate (THZ-P) and 2-methyl-4-amino-5-hydroxymethyl pyrimidine pyrophosphate (HMP-PP) to form thiamine monophosphate (TMP). This chain is Thiamine-phosphate synthase, found in Yersinia pseudotuberculosis serotype I (strain IP32953).